The primary structure comprises 636 residues: DNA mismatch repair protein MutL (636 aa).

Residues 341-420 (APLINKPEQQ…PGAEEYTPEA (80 aa)) form a disordered region. Residues 348-358 (EQQKLDFDQVR) show a composition bias toward basic and acidic residues.

It belongs to the DNA mismatch repair MutL/HexB family.

Functionally, this protein is involved in the repair of mismatches in DNA. It is required for dam-dependent methyl-directed DNA mismatch repair. May act as a 'molecular matchmaker', a protein that promotes the formation of a stable complex between two or more DNA-binding proteins in an ATP-dependent manner without itself being part of a final effector complex. In Bacillus licheniformis (strain ATCC 14580 / DSM 13 / JCM 2505 / CCUG 7422 / NBRC 12200 / NCIMB 9375 / NCTC 10341 / NRRL NRS-1264 / Gibson 46), this protein is DNA mismatch repair protein MutL.